The sequence spans 249 residues: DNA repair protein RecO (249 aa).

It belongs to the RecO family.

Involved in DNA repair and RecF pathway recombination. This is DNA repair protein RecO from Sinorhizobium medicae (strain WSM419) (Ensifer medicae).